A 1265-amino-acid polypeptide reads, in one-letter code: Nestin (1265 aa).

Residues 1 to 16 (MELLGVRQPFGPQFQE) form a head region. A coil 1A region spans residues 17-52 (EKYQMLELNHRLESYLGRVKLLEEENKLLREEIHTL). One can recognise an IF rod domain in the interval 17–324 (EKYQMLELNH…ALLDSEGLRI (308 aa)). Residues 53–64 (KSSRDPAGQRKA) are linker 1. The interval 65 to 160 (QEEALSQARR…QVHQENMETM (96 aa)) is coil 1B. The tract at residues 161 to 183 (QASLKQTKQVLMAPQRVQATSIP) is linker 12. The interval 184-203 (DLGQEYGYKAAQAWQEAANN) is coil 2A. Residues 204–206 (YQK) form a linker 2 region. The coil 2B stretch occupies residues 207 to 324 (QVGRLEESLN…ALLDSEGLRI (118 aa)). The segment at 325 to 1265 (DRPTPNKTSS…EGDSWSSGDE (941 aa)) is tail. A compositionally biased stretch (polar residues) spans 383-402 (PSWTLTRGTPQRPPSSTSMT). Disordered regions lie at residues 383 to 521 (PSWT…TEVS), 667 to 830 (FEVE…PDME), 863 to 1073 (HESL…KASQ), 1093 to 1116 (AQTTHASMDEHSSISPVNENLESS), and 1232 to 1265 (IRDDKQKDGQPAQSKIVQSDDSADEGDSWSSGDE). Residues 403 to 418 (EKTEDHISEETKRSAE) show a composition bias toward basic and acidic residues. Polar residues predominate over residues 422–441 (DQLQQEKVQQDWTLESTLPK). Positions 444–459 (AEPKPELQPEEIKVED) are enriched in basic and acidic residues. The segment covering 479–496 (LTSVPAEQQGSMSQTPET) has biased composition (polar residues). Composition is skewed to acidic residues over residues 508 to 520 (EVSEDGKDEDTEV) and 730 to 739 (LNEDQSEAEE). 3 stretches are compositionally biased toward basic and acidic residues: residues 784-796 (YKSDEETSHHIGE), 803-819 (EKERIDQGHLNEKRFNT), and 863-897 (HESLDVVVQESERKGNLEKEDSGDADNMRDNKEED). Over residues 901 to 910 (FEQNENQQLT) the composition is skewed to polar residues. The segment covering 911–935 (EHQHVHTEQVEDKPVHSHETQEHVN) has biased composition (basic and acidic residues). Residues 943 to 956 (SERSQQEQLEESSL) are compositionally biased toward low complexity. Over residues 1015–1043 (PNASQCFQNTSLLAAATPNEQPLTFTNEV) the composition is skewed to polar residues. The segment covering 1061–1070 (SEEKSTDEPK) has biased composition (basic and acidic residues). 2 stretches are compositionally biased toward polar residues: residues 1105-1116 (SISPVNENLESS) and 1242-1251 (PAQSKIVQSD). Residues 1252–1265 (DSADEGDSWSSGDE) show a composition bias toward acidic residues.

The protein belongs to the intermediate filament family. Forms homodimers and homotetramers in vitro. In mixtures with other intermediate filament proteins such as vimentin and alpha-internexin, preferentially forms heterodimers. As to expression, widely expressed throughout the developing nervous system at 24 hours post-fertilization (hpf). As development progresses, expression becomes restricted to proliferative zones of the developing and postembryonic central nervous system. In the peripheral nervous system, expressed in the cranial ganglia. Also expressed in mesodermal muscle precursor cells and in cranial mesenchymal tissue.

Promotes the disassembly of phosphorylated vimentin intermediate filaments (IF) during mitosis and may play a role in the trafficking and distribution of IF proteins and other cellular factors to daughter cells during progenitor cell division. Required for survival, renewal and mitogen-stimulated proliferation of neural progenitor cells. Required for brain and eye development. The sequence is that of Nestin (nes) from Danio rerio (Zebrafish).